Here is a 330-residue protein sequence, read N- to C-terminus: MPLLDIRNLTIEFKTSEGWVKAVDRVSMTLSEGEIRGLVGESGSGKSLIAKAICGVAKDNWRVTADRMRFDDIDLLRLSSRERRKLVGHNVSMIFQEPQSCLDPSERVGRQLMQNIPAWTYKGRWWQRLGWRKRRAIELLHRVGIKDHKDAMRSFPYELTDGECQKVMIAIALANQPRLLIADEPTNSMEPTTQAQIFRLLTRLNQNSNTTILLISHDLQMLSQWADKINVLYCGQTVETAPSKDLVTMPHHPYTQALIRAIPDFGSAMPHKSRLNTLPGAIPLLEQLPIGCRLGPRCPYAQRECIITPRLTGAKNHLYACHFPLNMERE.

An ABC transporter domain is found at 6–259 (IRNLTIEFKT…PHHPYTQALI (254 aa)). 40 to 47 (GESGSGKS) serves as a coordination point for ATP.

Belongs to the ABC transporter superfamily.

It localises to the cell inner membrane. Functionally, involved in a peptide intake transport system that plays a role in the resistance to antimicrobial peptides. The chain is Peptide transport system ATP-binding protein SapD from Salmonella typhimurium (strain LT2 / SGSC1412 / ATCC 700720).